The chain runs to 473 residues: Bifunctional protein HldE (473 aa).

Positions 1–318 are ribokinase; that stretch reads MKLSMPRFDQ…RAVQREEGSE (318 aa). Residue 194 to 197 coordinates ATP; it reads NLGE. The active site involves D263. The cytidylyltransferase stretch occupies residues 343-473; that stretch reads FTNGCFDILH…TAIVEKIRKA (131 aa).

This sequence in the N-terminal section; belongs to the carbohydrate kinase PfkB family. In the C-terminal section; belongs to the cytidylyltransferase family. Homodimer.

The catalysed reaction is D-glycero-beta-D-manno-heptose 7-phosphate + ATP = D-glycero-beta-D-manno-heptose 1,7-bisphosphate + ADP + H(+). The enzyme catalyses D-glycero-beta-D-manno-heptose 1-phosphate + ATP + H(+) = ADP-D-glycero-beta-D-manno-heptose + diphosphate. It functions in the pathway nucleotide-sugar biosynthesis; ADP-L-glycero-beta-D-manno-heptose biosynthesis; ADP-L-glycero-beta-D-manno-heptose from D-glycero-beta-D-manno-heptose 7-phosphate: step 1/4. The protein operates within nucleotide-sugar biosynthesis; ADP-L-glycero-beta-D-manno-heptose biosynthesis; ADP-L-glycero-beta-D-manno-heptose from D-glycero-beta-D-manno-heptose 7-phosphate: step 3/4. In terms of biological role, catalyzes the phosphorylation of D-glycero-D-manno-heptose 7-phosphate at the C-1 position to selectively form D-glycero-beta-D-manno-heptose-1,7-bisphosphate. Functionally, catalyzes the ADP transfer from ATP to D-glycero-beta-D-manno-heptose 1-phosphate, yielding ADP-D-glycero-beta-D-manno-heptose. This is Bifunctional protein HldE from Stutzerimonas stutzeri (strain A1501) (Pseudomonas stutzeri).